The sequence spans 205 residues: Ribosomal RNA small subunit methyltransferase G (205 aa).

S-adenosyl-L-methionine is bound by residues glycine 70, leucine 75, 121 to 122 (IE), and arginine 136.

This sequence belongs to the methyltransferase superfamily. RNA methyltransferase RsmG family.

It is found in the cytoplasm. It carries out the reaction guanosine(527) in 16S rRNA + S-adenosyl-L-methionine = N(7)-methylguanosine(527) in 16S rRNA + S-adenosyl-L-homocysteine. Its function is as follows. Specifically methylates the N7 position of guanine in position 527 of 16S rRNA. The protein is Ribosomal RNA small subunit methyltransferase G of Methylococcus capsulatus (strain ATCC 33009 / NCIMB 11132 / Bath).